The primary structure comprises 128 residues: Large ribosomal subunit protein bL17 (128 aa).

This sequence belongs to the bacterial ribosomal protein bL17 family. As to quaternary structure, part of the 50S ribosomal subunit. Contacts protein L32.

In Klebsiella pneumoniae (strain 342), this protein is Large ribosomal subunit protein bL17.